The primary structure comprises 177 residues: Inorganic pyrophosphatase (177 aa).

Substrate is bound by residues Lys34, Arg48, and Tyr60. The Mg(2+) site is built by Asp70, Asp75, and Asp107. Residue Tyr144 coordinates substrate.

The protein belongs to the PPase family. Homohexamer. Mg(2+) serves as cofactor.

It is found in the cytoplasm. The catalysed reaction is diphosphate + H2O = 2 phosphate + H(+). Functionally, catalyzes the hydrolysis of inorganic pyrophosphate (PPi) forming two phosphate ions. The sequence is that of Inorganic pyrophosphatase from Picrophilus torridus (strain ATCC 700027 / DSM 9790 / JCM 10055 / NBRC 100828 / KAW 2/3).